The primary structure comprises 212 residues: 3-isopropylmalate dehydratase small subunit (212 aa).

It belongs to the LeuD family. LeuD type 1 subfamily. As to quaternary structure, heterodimer of LeuC and LeuD.

It catalyses the reaction (2R,3S)-3-isopropylmalate = (2S)-2-isopropylmalate. It participates in amino-acid biosynthesis; L-leucine biosynthesis; L-leucine from 3-methyl-2-oxobutanoate: step 2/4. Catalyzes the isomerization between 2-isopropylmalate and 3-isopropylmalate, via the formation of 2-isopropylmaleate. This chain is 3-isopropylmalate dehydratase small subunit, found in Laribacter hongkongensis (strain HLHK9).